The chain runs to 302 residues: Deoxyhypusine hydroxylase-B (302 aa).

5 HEAT-like PBS-type repeats span residues 49 to 75 (LAHE…VLKD), 82 to 108 (VRHE…SLAV), 171 to 200 (MYER…LGVK), 204 to 230 (LRHE…VLKN), and 237 to 263 (VRHE…FAKD). Fe cation-binding residues include His51, Glu52, His84, and Glu85. Positions 206, 207, 239, and 240 each coordinate Fe cation.

Belongs to the deoxyhypusine hydroxylase family. It depends on Fe(2+) as a cofactor.

It catalyses the reaction [eIF5A protein]-deoxyhypusine + AH2 + O2 = [eIF5A protein]-hypusine + A + H2O. Its pathway is protein modification; eIF5A hypusination. Its function is as follows. Catalyzes the hydroxylation of the N(6)-(4-aminobutyl)-L-lysine intermediate to form hypusine, an essential post-translational modification only found in mature eIF-5A factor. In Oryza sativa subsp. japonica (Rice), this protein is Deoxyhypusine hydroxylase-B.